A 1233-amino-acid polypeptide reads, in one-letter code: Structural maintenance of chromosomes protein 1A (1233 aa).

32–39 (GPNGSGKS) contacts ATP. 2 coiled-coil regions span residues 104–124 (EYKI…LEKL) and 163–503 (ELAQ…KAEI). Residues 284-293 (IKEKDSELNQ) are compositionally biased toward basic and acidic residues. Disordered regions lie at residues 284–307 (IKEK…NTSH) and 350–369 (FEER…TLEE). Ser358 and Ser360 each carry phosphoserine. Residues 515 to 629 (VYGRLIDLCQ…DNVEDARRIA (115 aa)) enclose the SMC hinge domain. 2 positions are modified to N6-acetyllysine: Lys648 and Lys713. The stretch at 660 to 935 (KAKARRWDEK…RHNLLQACKM (276 aa)) forms a coiled coil. Residues 946-969 (TMDDISQEEGGSQGEESVSGSQRT) form a disordered region. Positions 953 to 967 (EEGGSQGEESVSGSQ) are enriched in low complexity. Ser957, Ser962, Ser966, and Ser970 each carry phosphoserine. A coiled-coil region spans residues 991–1068 (KDAQAEEEIK…FEQIKKERFD (78 aa)). Lys1037 bears the N6-acetyllysine mark.

It belongs to the SMC family. SMC1 subfamily. Forms a heterodimer with SMC3 in cohesin complexes. Cohesin complexes are composed of the SMC1 (SMC1A or meiosis-specific SMC1B) and SMC3 heterodimer attached via their SMC hinge domain, RAD21 which link them, and one STAG protein (STAG1, STAG2 or meiosis-specific STAG3), which interacts with RAD21. In germ cell cohesin complexes, SMC1A is mutually exclusive with SMC1B. Found in a complex with CDCA5, SMC3 and RAD21, PDS5A/SCC-112 and PDS5B/APRIN. Interacts with STAG3, NDC80, BRAC1, BRAT1 and RPGR. Found in a complex containing POLE and SMC3. The cohesin complex interacts with the cohesin loading complex subunits NIPBL/Scc2 (via HEAT repeats) and MAU2/Scc4. NIPBL directly contacts all members of the complex, RAD21, SMC1A/B, SMC3 and STAG1. Interacts with SYCP2. In terms of processing, phosphorylated upon ionizing radiation or DNA methylation. Phosphorylation of Ser-957 and Ser-966 activates it and is required for S-phase checkpoint activation. Post-translationally, ubiquitinated by the DCX(DCAF15) complex, leading to its degradation.

It is found in the nucleus. It localises to the chromosome. Functionally, involved in chromosome cohesion during cell cycle and in DNA repair. Central component of cohesin complex. The cohesin complex is required for the cohesion of sister chromatids after DNA replication. The cohesin complex apparently forms a large proteinaceous ring within which sister chromatids can be trapped. At anaphase, the complex is cleaved and dissociates from chromatin, allowing sister chromatids to segregate. The cohesin complex may also play a role in spindle pole assembly during mitosis. Involved in DNA repair via its interaction with BRCA1 and its related phosphorylation by ATM, or via its phosphorylation by ATR. Works as a downstream effector both in the ATM/NBS1 branch and in the ATR/MSH2 branch of S-phase checkpoint. The polypeptide is Structural maintenance of chromosomes protein 1A (Smc1a) (Rattus norvegicus (Rat)).